A 704-amino-acid polypeptide reads, in one-letter code: Elongation factor G (704 aa).

Residues Ala-8–Val-290 enclose the tr-type G domain. GTP is bound by residues Ala-17–Thr-24, Asp-88–His-92, and Asn-142–Asp-145. N6-acetyllysine is present on residues Lys-504 and Lys-643.

This sequence belongs to the TRAFAC class translation factor GTPase superfamily. Classic translation factor GTPase family. EF-G/EF-2 subfamily.

It is found in the cytoplasm. Its function is as follows. Catalyzes the GTP-dependent ribosomal translocation step during translation elongation. During this step, the ribosome changes from the pre-translocational (PRE) to the post-translocational (POST) state as the newly formed A-site-bound peptidyl-tRNA and P-site-bound deacylated tRNA move to the P and E sites, respectively. Catalyzes the coordinated movement of the two tRNA molecules, the mRNA and conformational changes in the ribosome. In Shigella sonnei (strain Ss046), this protein is Elongation factor G.